Here is a 326-residue protein sequence, read N- to C-terminus: Dolichyl-phosphate beta-glucosyltransferase (326 aa).

The Lumenal portion of the chain corresponds to 1 to 7 (MWTCLCQ). Residues 8 to 28 (LCFYLLSTLAVAALSIAALVL) form a helical membrane-spanning segment. Residues 29–326 (YKTKPYPNIK…RIASIQKKEK (298 aa)) lie on the Cytoplasmic side of the membrane.

This sequence belongs to the glycosyltransferase 2 family.

The protein localises to the endoplasmic reticulum membrane. The enzyme catalyses a di-trans,poly-cis-dolichyl phosphate + UDP-alpha-D-glucose = a di-trans,poly-cis-dolichyl beta-D-glucosyl phosphate + UDP. The protein operates within protein modification; protein glycosylation. Functionally, required for normal production of N-glycosylated proteins in the endoplasmic reticulum (ER). Required for embryonic segmentation, dorsal-ventral patterning and gastrulation. Required for chitin orientation and shaping of the apical and lateral plasma membranes of epidermal cells during cuticle differentiation. Also required for correctly shaping apical membrane topology of the epithelia of other organs such as the midgut and the hindgut. The sequence is that of Dolichyl-phosphate beta-glucosyltransferase (wol) from Drosophila melanogaster (Fruit fly).